The sequence spans 240 residues: Biosynthetic peptidoglycan transglycosylase (240 aa).

Residues 12 to 31 (ALMWFMVGSVLLVLLLRFVP) form a helical membrane-spanning segment.

This sequence belongs to the glycosyltransferase 51 family.

The protein resides in the cell inner membrane. The catalysed reaction is [GlcNAc-(1-&gt;4)-Mur2Ac(oyl-L-Ala-gamma-D-Glu-L-Lys-D-Ala-D-Ala)](n)-di-trans,octa-cis-undecaprenyl diphosphate + beta-D-GlcNAc-(1-&gt;4)-Mur2Ac(oyl-L-Ala-gamma-D-Glu-L-Lys-D-Ala-D-Ala)-di-trans,octa-cis-undecaprenyl diphosphate = [GlcNAc-(1-&gt;4)-Mur2Ac(oyl-L-Ala-gamma-D-Glu-L-Lys-D-Ala-D-Ala)](n+1)-di-trans,octa-cis-undecaprenyl diphosphate + di-trans,octa-cis-undecaprenyl diphosphate + H(+). The protein operates within cell wall biogenesis; peptidoglycan biosynthesis. Functionally, peptidoglycan polymerase that catalyzes glycan chain elongation from lipid-linked precursors. This chain is Biosynthetic peptidoglycan transglycosylase, found in Pseudomonas fluorescens (strain ATCC BAA-477 / NRRL B-23932 / Pf-5).